A 707-amino-acid chain; its full sequence is Serine/threonine protein kinase UL97 (707 aa).

Residues 1 to 14 (MSSALRSRARSASL) are compositionally biased toward low complexity. Disordered stretches follow at residues 1-32 (MSSA…PSRA), 113-147 (DGEK…DGYH), 176-199 (FTGG…PLRP), and 231-264 (ESQD…EADS). Positions 113 to 127 (DGEKEDAASDKENQR) are enriched in basic and acidic residues. Residues 178-188 (GGSDPSDSVSG) are compositionally biased toward low complexity. The active-site Proton acceptor is D456.

The protein belongs to the protein kinase superfamily. Tyr protein kinase family. HCMV ganciclovir subfamily. In terms of assembly, interacts with UL83. Autophosphorylates on serine and threonine residues.

It is found in the virion. The catalysed reaction is L-seryl-[protein] + ATP = O-phospho-L-seryl-[protein] + ADP + H(+). It catalyses the reaction L-threonyl-[protein] + ATP = O-phospho-L-threonyl-[protein] + ADP + H(+). Functionally, serine/threonine protein kinase that plays important roles in several processes including nuclear viral egress, viral replication or regulation of host cell cycle progression. Participates in the acquisition of tegument during virion morphogenesis in the nucleus. Redistributes the host nuclear lamina by phosphorylating cellular Lamins-A/C. Plays a role in viral DNA synthesis by phosphorylating the DNA polymerase processivity factor UL44. Stimulates host cell cycle to support viral DNA synthesis by phosphorylating host retinoblastoma/RB1 protein. Additional substrates have been identified including host EF1D or H2B. Also phosphorylates host SAMHD1 and thereby counteracts its antiviral effect by reducing its dNTP hydrolase activity. This Homo sapiens (Human) protein is Serine/threonine protein kinase UL97 (UL97).